The sequence spans 577 residues: MKMVVEKTEKFDPEEVIEEFEVLTKDAGKIQEETLQKILEENGGTEYLQQWGLNGKTDSLSFKNCIPIVTHKDLEPYIHRIADGDLSPILTGKPITTISLSSGTTQGKPKFVPFNEELMESTMQIFKTSFVFRNREFPVVNGKALQFIYGSKQFKTKGGLAAGTATTNVYRNAQFKKTMKAMQTPCCSPDEVIFGPDFQQSLYCHLLCGLIFRDEVQVVSSTFAHSIVHAFRNFEQIWQELVTNIREGVLSSRVIVPSMRAAMSKLLKPDPELADTIFNKCSRLSNWYGLIPELFPNTRYIYGIMTGSMEPYLKKLRHYAGDLPLLSADYGSSEGWIGANVNPELPPELVTYAVLPNIGYFEFIPLMENLDGLEPMPVGLTEVKLGEEYEIVVTNFAGLYRYRLGDVVKIKGFHNGTPELQFICRRNLLLSINIDKNTEKDLQLAVEAAAKILSDEKLEVVDFTSHVNVSADPGHYVIFWELNGEASEEILKECCNCLDKSFVDAGYVGSRKVHAIGALELRIVKRGTFHKILDHFVGLGAAVSQFKTPRCVGPTNLSVLQILSSNVVESYFSTAFC.

An ATP-binding site is contributed by Ser-99. Ser-102 provides a ligand contact to jasmonate. Residues Met-119, Thr-122, Gly-163, Asn-168, and 331 to 336 contribute to the ATP site; that span reads GSSEGW. 166–170 contributes to the an L-alpha-amino acid binding site; that stretch reads TTNVY. 328-331 contacts jasmonate; it reads ADYG. Residue 531–535 participates in an L-alpha-amino acid binding; that stretch reads KILDH.

The protein belongs to the IAA-amido conjugating enzyme family.

It catalyses the reaction a jasmonate + an L-alpha-amino acid + ATP = a jasmonyl-L-amino acid + AMP + diphosphate + H(+). Functionally, catalyzes the synthesis of jasmonate-amino acid conjugates by adenylation. Catalyzes the conjugation of jasmonate (JA) to Ile, Leu and Val. Catalyzes the conjugation of jasmonate (JA) to Ile to mediate defense signaling and resistance to the herbivore Manduca sexta caterpillars. This is Jasmonoyl--L-amino acid synthetase JAR4 from Nicotiana attenuata (Coyote tobacco).